The chain runs to 661 residues: Arginine--tRNA ligase, cytoplasmic (661 aa).

N-acetylmethionine is present on M1. The could be involved in the assembly of the multisynthetase complex stretch occupies residues M1–N73. L-arginine-binding positions include S201–N203, H212, Y385, D389, and Q413. A 'HIGH' region motif is present at residues P202–L213. The interval N530–S544 is interaction with tRNA.

This sequence belongs to the class-I aminoacyl-tRNA synthetase family. Interacts (via N-terminus) with AIMP1 (via N-terminus); this stimulates its catalytic activity. Interacts (via N-terminus) with LARS2 (via C-terminus). Monomer. Part of a multisubunit complex that groups tRNA ligases for Arg (RARS1), Asp (DARS1), Gln (QARS1), Ile (IARS1), Leu (LARS1), Lys (KARS1), Met (MARS1) the bifunctional ligase for Glu and Pro (EPRS1) and the auxiliary subunits AIMP1/p43, AIMP2/p38 and EEF1E1/p18. Interacts with QARS1. Part of a complex composed of RARS1, QARS1 and AIMP1.

It is found in the cytoplasm. It localises to the cytosol. It carries out the reaction tRNA(Arg) + L-arginine + ATP = L-arginyl-tRNA(Arg) + AMP + diphosphate. Its function is as follows. Forms part of a macromolecular complex that catalyzes the attachment of specific amino acids to cognate tRNAs during protein synthesis. Modulates the secretion of AIMP1 and may be involved in generation of the inflammatory cytokine EMAP2 from AIMP1. The chain is Arginine--tRNA ligase, cytoplasmic (RARS1) from Cricetulus griseus (Chinese hamster).